Consider the following 628-residue polypeptide: DEAD-box ATP-dependent RNA helicase 9 (628 aa).

Residues 98-126 (LEVAKLGISPKIVSQLASRGITKLFPIQR) carry the Q motif motif. The region spanning 129–302 (LEPAMQGKDM…QKYLKNPVTI (174 aa)) is the Helicase ATP-binding domain. 142–149 (AKTGTGKT) serves as a coordination point for ATP. Residues 250–253 (DEAD) carry the DEAD box motif. The Helicase C-terminal domain maps to 331–478 (VLGELIKEHA…KINVEGSDLM (148 aa)). 2 disordered regions span residues 496–548 (GSYG…SGFG) and 571–628 (SGFG…FGSS). Over residues 500–509 (RRGSFGSSSS) the composition is skewed to low complexity. Positions 510–548 (RGGGFGDSGFGRSGGGFGRSGGGGFGRSSGGGFGDSGFG) are enriched in gly residues.

This sequence belongs to the DEAD box helicase family. DDX21/DDX50 subfamily.

It carries out the reaction ATP + H2O = ADP + phosphate + H(+). The polypeptide is DEAD-box ATP-dependent RNA helicase 9 (Oryza sativa subsp. japonica (Rice)).